Consider the following 250-residue polypeptide: MLILVTNDDGVHAPGIAALADSLHGLGQVVVVAPDRDRSAIGHALTLHAPLRADELRPGVFAVDGTPTDCVNLGIHGLLSSVPDLVVAGINRGANLGDDITYSGTVCAAMEATLMGVPALAVSLEGDTFASSEYRQAADAALFLAQKVSEEGLPSDTFLNVNVPAGRIRGIRLTRQGRRRYGDMVVEKMDPRGRKYYWLGAGECDFDYVDGTDCHAMHEGFISVTPLHLDLTNFRSFECLSRWSMTYSMD.

The a divalent metal cation site is built by aspartate 8, aspartate 9, serine 39, and asparagine 91.

The protein belongs to the SurE nucleotidase family. A divalent metal cation is required as a cofactor.

It localises to the cytoplasm. It carries out the reaction a ribonucleoside 5'-phosphate + H2O = a ribonucleoside + phosphate. Nucleotidase that shows phosphatase activity on nucleoside 5'-monophosphates. The protein is 5'-nucleotidase SurE of Syntrophotalea carbinolica (strain DSM 2380 / NBRC 103641 / GraBd1) (Pelobacter carbinolicus).